We begin with the raw amino-acid sequence, 436 residues long: Probable sodium/metabolite cotransporter BASS4, chloroplastic (436 aa).

A chloroplast-targeting transit peptide spans 1 to 47 (MAIASTLASTQNPFLCLRQPPSPGNRSVVFRRCQDPCGRRWISRSIR). A run of 9 helical transmembrane segments spans residues 109–129 (FLPLALVSGVGLGFANPTLGC), 131–151 (ADKYSFTKISTCGIFIISGLT), 157–177 (IGAAVKGWPLGLFGLISILLL), 195–215 (LVTGLGIFCCMPTTLSSGVAL), 225–245 (LALAVTVASNLLGILTIPFWV), 257–277 (FPTDQLFRSLIVTLLIPLIIG), 297–314 (LFSKINAICLSLVPWIQV), 328–348 (VFLAAVGIGILLHLSLLAFNA), and 403–423 (PCVAAHLNQIMIDSVLVNLWL).

It belongs to the bile acid:sodium symporter (BASS) (TC 2.A.28) family.

The protein localises to the membrane. It is found in the plastid. Its subcellular location is the chloroplast envelope. Functionally, may function as sodium-coupled metabolite transporter across the chloroplast envelope. The chain is Probable sodium/metabolite cotransporter BASS4, chloroplastic (BASS4) from Arabidopsis thaliana (Mouse-ear cress).